Here is a 602-residue protein sequence, read N- to C-terminus: Cytoskeleton-associated protein 4 (602 aa).

Positions 1-83 (MPSAKQRGSK…GGGGKSSSSS (83 aa)) are disordered. Residues 1 to 106 (MPSAKQRGSK…SASCSRRLGR (106 aa)) are Cytoplasmic-facing. Ser-3, Ser-17, and Ser-19 each carry phosphoserine. At Lys-21 the chain carries N6-acetyllysine. The segment covering 35-52 (KPPPAPQQPPPPPAPHPQ) has biased composition (pro residues). Positions 53–64 (QHPQQHPQNQAH) are enriched in low complexity. Cys-100 carries the S-palmitoyl cysteine; by ZDHHC2 lipid modification. Residues 107–127 (ALNFLFYLALVAAAAFSGWCV) form a helical membrane-spanning segment. Over 128-602 (HHVLEEVQQV…VKVEKIHEKV (475 aa)) the chain is Extracellular. Residues 130–214 (VLEEVQQVRR…QKLQNEILKD (85 aa)) are a coiled coil. Ser-232 is subject to Phosphoserine; by FAM20C. Coiled coils occupy residues 256-460 (TEVQ…GLGS) and 533-602 (LSSL…HEKV). A Phosphoserine modification is found at Ser-312.

As to quaternary structure, interacts with REEP5. Post-translationally, reversibly palmitoylated. Palmitoylation at Cys-100 by ZDHHC2 is required for its trafficking from the ER to the plasma membrane and for its perinuclear localization. Palmitoylation by ZDHHC2 is also required for its function in APF-mediated antiproliferative signaling. In terms of processing, increased phosphorylation during mitosis prevents binding to microtubules.

Its subcellular location is the endoplasmic reticulum membrane. The protein resides in the cell membrane. The protein localises to the cytoplasm. It is found in the cytoskeleton. It localises to the perinuclear region. Functionally, mediates the anchoring of the endoplasmic reticulum to microtubules. High-affinity epithelial cell surface receptor for the FZD8-related low molecular weight sialoglycopeptide APF/antiproliferative factor. Mediates the APF antiproliferative signaling within cells. This is Cytoskeleton-associated protein 4 (CKAP4) from Homo sapiens (Human).